Here is a 280-residue protein sequence, read N- to C-terminus: Diaminopimelate epimerase (280 aa).

Residues Asn-14 and Asn-67 each coordinate substrate. The active-site Proton donor is Cys-76. Substrate contacts are provided by residues 77–78 (GN), Asn-193, and 210–211 (ER). The active-site Proton acceptor is Cys-220. 221-222 (GT) provides a ligand contact to substrate.

This sequence belongs to the diaminopimelate epimerase family. In terms of assembly, homodimer.

Its subcellular location is the cytoplasm. The catalysed reaction is (2S,6S)-2,6-diaminopimelate = meso-2,6-diaminopimelate. The protein operates within amino-acid biosynthesis; L-lysine biosynthesis via DAP pathway; DL-2,6-diaminopimelate from LL-2,6-diaminopimelate: step 1/1. Functionally, catalyzes the stereoinversion of LL-2,6-diaminopimelate (L,L-DAP) to meso-diaminopimelate (meso-DAP), a precursor of L-lysine. In Methanocella arvoryzae (strain DSM 22066 / NBRC 105507 / MRE50), this protein is Diaminopimelate epimerase.